The chain runs to 418 residues: UDP-N-acetylglucosamine 1-carboxyvinyltransferase (418 aa).

23 to 24 (KN) is a binding site for phosphoenolpyruvate. Residue arginine 93 participates in UDP-N-acetyl-alpha-D-glucosamine binding. The active-site Proton donor is the aspartate 117. Residues aspartate 305 and valine 327 each coordinate UDP-N-acetyl-alpha-D-glucosamine.

Belongs to the EPSP synthase family. MurA subfamily.

The protein resides in the cytoplasm. It catalyses the reaction phosphoenolpyruvate + UDP-N-acetyl-alpha-D-glucosamine = UDP-N-acetyl-3-O-(1-carboxyvinyl)-alpha-D-glucosamine + phosphate. Its pathway is cell wall biogenesis; peptidoglycan biosynthesis. Functionally, cell wall formation. Adds enolpyruvyl to UDP-N-acetylglucosamine. The polypeptide is UDP-N-acetylglucosamine 1-carboxyvinyltransferase (Mycobacterium bovis (strain ATCC BAA-935 / AF2122/97)).